Reading from the N-terminus, the 156-residue chain is MKLQLIAVGTRMPDWVTRGFEEYQRRFPRDMALELIEIPAGKRGKNADIVRILQKEGEQMLAAIPKGNHIVTLDLPGKNWTTPELASAMNKWQLDGRDVSLLVGGPEGLAPACKEAAHQSWCLSALTLPHPLVRIVVAESLYRAWSVNTNHPYHRE.

Residues leucine 73, glycine 104, and 123 to 128 (LSALTL) contribute to the S-adenosyl-L-methionine site.

The protein belongs to the RNA methyltransferase RlmH family. As to quaternary structure, homodimer.

The protein resides in the cytoplasm. It catalyses the reaction pseudouridine(1915) in 23S rRNA + S-adenosyl-L-methionine = N(3)-methylpseudouridine(1915) in 23S rRNA + S-adenosyl-L-homocysteine + H(+). In terms of biological role, specifically methylates the pseudouridine at position 1915 (m3Psi1915) in 23S rRNA. In Shewanella oneidensis (strain ATCC 700550 / JCM 31522 / CIP 106686 / LMG 19005 / NCIMB 14063 / MR-1), this protein is Ribosomal RNA large subunit methyltransferase H.